A 146-amino-acid polypeptide reads, in one-letter code: MLTFQFLFRASPATLLLTLYLQLGVITAQEDTRRTIILSTELPQEVTANELTTLKLKVETELRECMVIKAYLVSSKPLAGPFNYKYTGCLCSDYPRTFYWDFQTNSTVRIATVVDIIRELNICPDDQAVVPIKSNRYYAITDLTVN.

The signal sequence occupies residues 1–28; it reads MLTFQFLFRASPATLLLTLYLQLGVITA. Gln29 is modified (pyrrolidone carboxylic acid). Disulfide bonds link Cys65-Cys91 and Cys89-Cys123. The N-linked (GlcNAc...) asparagine glycan is linked to Asn105.

The protein belongs to the PIP family. Monomer. Interacts with AZGP1.

It is found in the secreted. The sequence is that of Prolactin-inducible protein homolog (PIP) from Cavia porcellus (Guinea pig).